The following is a 586-amino-acid chain: Aspartate--tRNA(Asp/Asn) ligase (586 aa).

Residue Glu172 coordinates L-aspartate. Positions 196 to 199 are aspartate; the sequence is QLYK. Residue Arg218 coordinates L-aspartate. ATP contacts are provided by residues 218–220 and Gln227; that span reads RDE. His446 is an L-aspartate binding site. Residue Glu480 coordinates ATP. Position 487 (Arg487) interacts with L-aspartate. 532–535 provides a ligand contact to ATP; sequence GIDR.

It belongs to the class-II aminoacyl-tRNA synthetase family. Type 1 subfamily. As to quaternary structure, homodimer.

It localises to the cytoplasm. The catalysed reaction is tRNA(Asx) + L-aspartate + ATP = L-aspartyl-tRNA(Asx) + AMP + diphosphate. Functionally, aspartyl-tRNA synthetase with relaxed tRNA specificity since it is able to aspartylate not only its cognate tRNA(Asp) but also tRNA(Asn). Reaction proceeds in two steps: L-aspartate is first activated by ATP to form Asp-AMP and then transferred to the acceptor end of tRNA(Asp/Asn). This Borreliella afzelii (strain PKo) (Borrelia afzelii) protein is Aspartate--tRNA(Asp/Asn) ligase.